The chain runs to 150 residues: Transcriptional repressor NrdR (150 aa).

A zinc finger lies at 3–34 (CPFCGQLDSKVVDSRPDKGGAAIRRRRECESC). Positions 49–139 (PLVLKKDGRR…VYRSFKDVNE (91 aa)) constitute an ATP-cone domain.

This sequence belongs to the NrdR family. Zn(2+) is required as a cofactor.

In terms of biological role, negatively regulates transcription of bacterial ribonucleotide reductase nrd genes and operons by binding to NrdR-boxes. The sequence is that of Transcriptional repressor NrdR from Geobacter sulfurreducens (strain ATCC 51573 / DSM 12127 / PCA).